The primary structure comprises 398 residues: MAKLTVKDLDLKGKKVLVRVDFNVPLKNGVITNDNRISAALPTIKYIIEHGGRAILFSHLGRVKEEADKEGKSLAPVAKNLAEKLGQEVIFPGSTRGAELEAAIDALEDGQVLLVENTRFEDIDGKKESKNDPELGKYWASLGEGIFVNDAFGTAHRAHASNVGISANVEKAVAGFLLENEIAYIKEAVEAPERPFVAILGGSKVSDKIGVIENLLEKADKVLIGGGMTYTFYKAQGIEIGNSLCEEDKLDVAKSLLEKSNGKLILPVDSKEANAFADYTEVKVTEGEAVDAGFLGLDIGPKSIAKFDEALTGAKTVVWNGPMGVFENPDFQEGTIGVMDAIVKQPGVKSIIGGGDSAAAAINLGRADKFSWISTGGGASMELLEGKELPGLAALTEK.

Residues 21–23, R36, 59–62, R119, and R157 contribute to the substrate site; these read DFN and HLGR. ATP-binding positions include K208, G296, E327, and 354 to 357; that span reads GGDS.

The protein belongs to the phosphoglycerate kinase family. In terms of assembly, monomer.

It is found in the cytoplasm. The enzyme catalyses (2R)-3-phosphoglycerate + ATP = (2R)-3-phospho-glyceroyl phosphate + ADP. The protein operates within carbohydrate degradation; glycolysis; pyruvate from D-glyceraldehyde 3-phosphate: step 2/5. The polypeptide is Phosphoglycerate kinase (Streptococcus equi subsp. zooepidemicus (strain H70)).